A 245-amino-acid chain; its full sequence is Polyhedrin (245 aa).

It belongs to the polyhedrin family.

Its function is as follows. Major component of the virus occlusion bodies, which are large proteinaceous structures (polyhedra), that protect the virus from the outside environment for extended periods until they are ingested by insect larvae. This Lepidoptera (butterflies and moths) protein is Polyhedrin (PH).